A 299-amino-acid polypeptide reads, in one-letter code: ATP phosphoribosyltransferase (299 aa).

Belongs to the ATP phosphoribosyltransferase family. Long subfamily. Mg(2+) is required as a cofactor.

The protein resides in the cytoplasm. It catalyses the reaction 1-(5-phospho-beta-D-ribosyl)-ATP + diphosphate = 5-phospho-alpha-D-ribose 1-diphosphate + ATP. Its pathway is amino-acid biosynthesis; L-histidine biosynthesis; L-histidine from 5-phospho-alpha-D-ribose 1-diphosphate: step 1/9. Feedback inhibited by histidine. Its function is as follows. Catalyzes the condensation of ATP and 5-phosphoribose 1-diphosphate to form N'-(5'-phosphoribosyl)-ATP (PR-ATP). Has a crucial role in the pathway because the rate of histidine biosynthesis seems to be controlled primarily by regulation of HisG enzymatic activity. The protein is ATP phosphoribosyltransferase of Campylobacter jejuni subsp. jejuni serotype O:6 (strain 81116 / NCTC 11828).